The following is a 171-amino-acid chain: Nicotinamide-nucleotide adenylyltransferase (171 aa).

The protein belongs to the archaeal NMN adenylyltransferase family.

It localises to the cytoplasm. It catalyses the reaction beta-nicotinamide D-ribonucleotide + ATP + H(+) = diphosphate + NAD(+). Its pathway is cofactor biosynthesis; NAD(+) biosynthesis; NAD(+) from nicotinamide D-ribonucleotide: step 1/1. This chain is Nicotinamide-nucleotide adenylyltransferase, found in Methanococcus maripaludis (strain C6 / ATCC BAA-1332).